The chain runs to 160 residues: Anaerobic nitrite reductase HBII (160 aa).

Positions 8–157 constitute a Globin domain; it reads GFTEEQEALV…LVAAIKLEMK (150 aa). Residues 41–45 carry the Homodimerization motif; that stretch reads EIAPS. The heme b site is built by Ser51, Lys65, His69, Lys99, Ser103, and His104. The short motif at 111–123 is the Homodimerization element; it reads DEHFEVTKFALLE.

It belongs to the plant globin family. Homodimer. Requires heme b as cofactor.

It is found in the cytoplasm. The protein resides in the nucleus. The enzyme catalyses Fe(III)-heme b-[protein] + nitric oxide + H2O = Fe(II)-heme b-[protein] + nitrite + 2 H(+). Its function is as follows. Phytoglobin that reduces nitrite to nitric oxide (NO) under anoxic conditions (e.g. during flooding or in waterlogged soil) and upon root nodulation. Required for general plant development and during nodulation, especially for the onset of symbiosis. Monitors nitric oxide (NO) levels during early phase of the nitrogen-fixing symbiosis and buffers oxygen in functioning nodules. May not function as an oxygen storage or transport protein. Has an unusually high affinity for O(2) through a hexacoordinate heme iron because of a very low dissociation constant. This chain is Anaerobic nitrite reductase HBII, found in Casuarina glauca (Swamp oak).